A 462-amino-acid chain; its full sequence is uncharacterized protein (462 aa).

The next 2 helical transmembrane spans lie at 381 to 401 (WILG…FKGM) and 433 to 453 (LWIL…NLYI).

Its subcellular location is the cell membrane. This is an uncharacterized protein from Methanocaldococcus jannaschii (strain ATCC 43067 / DSM 2661 / JAL-1 / JCM 10045 / NBRC 100440) (Methanococcus jannaschii).